Reading from the N-terminus, the 380-residue chain is UDP-N-acetylglucosamine 2-epimerase (380 aa).

It belongs to the UDP-N-acetylglucosamine 2-epimerase family.

It is found in the cytoplasm. The enzyme catalyses UDP-N-acetyl-alpha-D-glucosamine = UDP-N-acetyl-alpha-D-mannosamine. The protein operates within cell wall biogenesis; poly(glycerol phosphate) teichoic acid biosynthesis. Functionally, catalyzes the conversion of UDP-N-acetylglucosamine into UDP-N-acetylmannosamine, a precursor of the teichoic acid linkage unit. This is UDP-N-acetylglucosamine 2-epimerase (mnaA) from Bacillus subtilis (strain 168).